Consider the following 236-residue polypeptide: Small ribosomal subunit protein uS3 (236 aa).

In terms of domain architecture, KH type-2 spans 39–107 (IRKFLKREMY…EVFINIKEAK (69 aa)). Residues 214–229 (PEKKEESKSGDKEVRS) show a composition bias toward basic and acidic residues. Residues 214 to 236 (PEKKEESKSGDKEVRSKSRRGRQ) are disordered.

The protein belongs to the universal ribosomal protein uS3 family. In terms of assembly, part of the 30S ribosomal subunit. Forms a tight complex with proteins S10 and S14.

In terms of biological role, binds the lower part of the 30S subunit head. Binds mRNA in the 70S ribosome, positioning it for translation. This chain is Small ribosomal subunit protein uS3, found in Helicobacter hepaticus (strain ATCC 51449 / 3B1).